The following is a 48-amino-acid chain: Large ribosomal subunit protein bL33B (48 aa).

Belongs to the bacterial ribosomal protein bL33 family.

The protein is Large ribosomal subunit protein bL33B (rpmG2) of Mycoplasma genitalium (strain ATCC 33530 / DSM 19775 / NCTC 10195 / G37) (Mycoplasmoides genitalium).